The sequence spans 322 residues: Phosphatidylserine decarboxylase proenzyme (322 aa).

Catalysis depends on charge relay system; for autoendoproteolytic cleavage activity residues Asp-90, His-147, and Ser-254. The active-site Schiff-base intermediate with substrate; via pyruvic acid; for decarboxylase activity is the Ser-254. Ser-254 is subject to Pyruvic acid (Ser); by autocatalysis. Residues Pro-293 to Val-322 form a disordered region. The segment covering Glu-308–Val-322 has biased composition (basic and acidic residues).

Belongs to the phosphatidylserine decarboxylase family. PSD-B subfamily. Prokaryotic type I sub-subfamily. In terms of assembly, heterodimer of a large membrane-associated beta subunit and a small pyruvoyl-containing alpha subunit. It depends on pyruvate as a cofactor. Is synthesized initially as an inactive proenzyme. Formation of the active enzyme involves a self-maturation process in which the active site pyruvoyl group is generated from an internal serine residue via an autocatalytic post-translational modification. Two non-identical subunits are generated from the proenzyme in this reaction, and the pyruvate is formed at the N-terminus of the alpha chain, which is derived from the carboxyl end of the proenzyme. The autoendoproteolytic cleavage occurs by a canonical serine protease mechanism, in which the side chain hydroxyl group of the serine supplies its oxygen atom to form the C-terminus of the beta chain, while the remainder of the serine residue undergoes an oxidative deamination to produce ammonia and the pyruvoyl prosthetic group on the alpha chain. During this reaction, the Ser that is part of the protease active site of the proenzyme becomes the pyruvoyl prosthetic group, which constitutes an essential element of the active site of the mature decarboxylase.

It localises to the cell membrane. The enzyme catalyses a 1,2-diacyl-sn-glycero-3-phospho-L-serine + H(+) = a 1,2-diacyl-sn-glycero-3-phosphoethanolamine + CO2. Its pathway is phospholipid metabolism; phosphatidylethanolamine biosynthesis; phosphatidylethanolamine from CDP-diacylglycerol: step 2/2. Functionally, catalyzes the formation of phosphatidylethanolamine (PtdEtn) from phosphatidylserine (PtdSer). The sequence is that of Phosphatidylserine decarboxylase proenzyme from Escherichia coli (strain 55989 / EAEC).